Consider the following 624-residue polypeptide: Ceramide transfer protein (624 aa).

Residues Met-1–Gly-11 show a composition bias toward polar residues. The disordered stretch occupies residues Met-1–Val-24. The PH domain occupies Pro-23–Thr-117. Residue Ser-126 is modified to Phosphoserine. Phosphoserine; by PKD is present on Ser-132. Ser-135 carries the post-translational modification Phosphoserine. The stretch at Ile-263 to His-303 forms a coiled coil. At Ser-315 the chain carries Phosphoserine. The FFAT signature appears at Glu-321–Glu-327. Residue Tyr-372 is modified to Phosphotyrosine. 3 positions are modified to phosphoserine: Ser-373, Ser-377, and Ser-380. The 230-residue stretch at Asp-389–Ala-618 folds into the START domain. An N-acylsphing-4-enine contacts are provided by Glu-472, Gln-493, Asn-530, and Tyr-579.

In terms of assembly, interacts with VAPA and VAPB. Interaction with VAPB is less efficient than with VAPA. Interacts (via FFAT motif) with the MOSPD2 (via MSP domain). In terms of processing, phosphorylation on Ser-132 decreases the affinity toward phosphatidylinositol 4-phosphate at Golgi membranes and reduces ceramide transfer activity. Inactivated by hyperphosphorylation of serine residues by CSNK1G2/CK1 that triggers dissociation from the Golgi complex, thus down-regulating ER-to-Golgi transport of ceramide and sphingomyelin synthesis.

The protein localises to the cytoplasm. It localises to the golgi apparatus. The protein resides in the endoplasmic reticulum. It carries out the reaction N-hexadecanoylsphing-4-enine(in) = N-hexadecanoylsphing-4-enine(out). Its function is as follows. Shelters ceramides and diacylglycerol lipids inside its START domain and mediates the intracellular trafficking of ceramides and diacylglycerol lipids in a non-vesicular manner. This is Ceramide transfer protein (CERT1) from Pongo abelii (Sumatran orangutan).